A 118-amino-acid polypeptide reads, in one-letter code: Large ribosomal subunit protein bL17 (118 aa).

The protein belongs to the bacterial ribosomal protein bL17 family. As to quaternary structure, part of the 50S ribosomal subunit. Contacts protein L32.

The polypeptide is Large ribosomal subunit protein bL17 (Hydrogenobaculum sp. (strain Y04AAS1)).